We begin with the raw amino-acid sequence, 195 residues long: Imidazoleglycerol-phosphate dehydratase (195 aa).

This sequence belongs to the imidazoleglycerol-phosphate dehydratase family.

It is found in the cytoplasm. The enzyme catalyses D-erythro-1-(imidazol-4-yl)glycerol 3-phosphate = 3-(imidazol-4-yl)-2-oxopropyl phosphate + H2O. The protein operates within amino-acid biosynthesis; L-histidine biosynthesis; L-histidine from 5-phospho-alpha-D-ribose 1-diphosphate: step 6/9. The polypeptide is Imidazoleglycerol-phosphate dehydratase (Methylorubrum populi (strain ATCC BAA-705 / NCIMB 13946 / BJ001) (Methylobacterium populi)).